A 292-amino-acid polypeptide reads, in one-letter code: Succinate dehydrogenase assembly factor 2, mitochondrial (292 aa).

Disordered regions lie at residues 27–68 (RSFG…NTTS) and 266–292 (TGFH…VFDS). Polar residues predominate over residues 55–68 (TNRPPNQHVPNTTS).

The protein belongs to the SDHAF2 family. In terms of assembly, interacts with the flavoprotein subunit within the SDH catalytic dimer.

It is found in the mitochondrion matrix. Functionally, plays an essential role in the assembly of succinate dehydrogenase (SDH), an enzyme complex (also referred to as respiratory complex II) that is a component of both the tricarboxylic acid (TCA) cycle and the mitochondrial electron transport chain, and which couples the oxidation of succinate to fumarate with the reduction of ubiquinone (coenzyme Q) to ubiquinol. Required for flavinylation (covalent attachment of FAD) of the flavoprotein subunit of the SDH catalytic dimer. The chain is Succinate dehydrogenase assembly factor 2, mitochondrial from Aspergillus flavus (strain ATCC 200026 / FGSC A1120 / IAM 13836 / NRRL 3357 / JCM 12722 / SRRC 167).